The sequence spans 422 residues: uncharacterized protein (422 aa).

The interval 1–22 (MIQNNPKSIGSSSNKSARSSGS) is disordered. Positions 7 to 22 (KSIGSSSNKSARSSGS) are enriched in low complexity.

This is an uncharacterized protein from Acanthamoeba polyphaga mimivirus (APMV).